The primary structure comprises 480 residues: MELKALFNLDPNVKVRTRFAPSPTGYLHVGGARTALYSWLYAKHNDGEFVLRIEDTDLERSTPEATAAILDAMEWLNLTWEHGPYFQTERFDRYNEVIDQMIEQGLAYRCYCSKERLEELRHQQEANKEKPRYDRHCLHDHEHSPYEPHVVRFKNPQEGSVVFEDAVRGRIEISNHELDDLIIRRSDGSPTYNFCVVVDDWDMGITHVVRGEDHINNTPRQINILKALGAPIPVYAHVSMINGDDGQKLSKRHGAVSVMQYRDEGYLPEALLNYLVRLGWGHGDQEIFTLEEMIKLFELEHVSKSASAFNTEKLLWLNQHYIRELPAEYVAQHLAWQYQEQGIDTSKGPALTEIVSMLGERCKTLKEMAASSRYFFEEFDGFDEAAAKKHLKAAAVEPLEKVKEKLTALSGWDAHSAHEAIEQTAAELEVGMGKVGMPLRVAVTGAGQSPSMDVTLAGIGRERVLARIQKAIDFIKAKNA.

The short motif at 21–31 (PSPTGYLHVGG) is the 'HIGH' region element. Residues cysteine 110, cysteine 112, cysteine 137, and histidine 139 each coordinate Zn(2+). The 'KMSKS' region signature appears at 248 to 252 (KLSKR). Lysine 251 lines the ATP pocket.

Belongs to the class-I aminoacyl-tRNA synthetase family. Glutamate--tRNA ligase type 1 subfamily. As to quaternary structure, monomer. It depends on Zn(2+) as a cofactor.

It is found in the cytoplasm. The enzyme catalyses tRNA(Glu) + L-glutamate + ATP = L-glutamyl-tRNA(Glu) + AMP + diphosphate. Catalyzes the attachment of glutamate to tRNA(Glu) in a two-step reaction: glutamate is first activated by ATP to form Glu-AMP and then transferred to the acceptor end of tRNA(Glu). The sequence is that of Glutamate--tRNA ligase from Mannheimia succiniciproducens (strain KCTC 0769BP / MBEL55E).